We begin with the raw amino-acid sequence, 478 residues long: DNA-directed RNA polymerase II subunit RPB1 (478 aa).

The Zn(2+) site is built by cysteine 68, cysteine 71, cysteine 78, histidine 81, cysteine 108, cysteine 111, and cysteine 149. Mg(2+) contacts are provided by aspartate 474 and aspartate 476.

This sequence belongs to the RNA polymerase beta' chain family. Component of the RNA polymerase II (Pol II) complex consisting of 12 subunits. Phosphorylation activates POL II.

It is found in the nucleus. The catalysed reaction is RNA(n) + a ribonucleoside 5'-triphosphate = RNA(n+1) + diphosphate. Its function is as follows. DNA-dependent RNA polymerase catalyzes the transcription of DNA into RNA using the four ribonucleoside triphosphates as substrates. Largest and catalytic component of RNA polymerase II which synthesizes mRNA precursors and many functional non-coding RNAs. Forms the polymerase active center together with the second largest subunit. Pol II is the central component of the basal RNA polymerase II transcription machinery. It is composed of mobile elements that move relative to each other. RPB1 is part of the core element with the central large cleft, the clamp element that moves to open and close the cleft and the jaws that are thought to grab the incoming DNA template. At the start of transcription, a single-stranded DNA template strand of the promoter is positioned within the central active site cleft of Pol II. A bridging helix emanates from RPB1 and crosses the cleft near the catalytic site and is thought to promote translocation of Pol II by acting as a ratchet that moves the RNA-DNA hybrid through the active site by switching from straight to bent conformations at each step of nucleotide addition. During transcription elongation, Pol II moves on the template as the transcript elongates. Elongation is influenced by the phosphorylation status of the C-terminal domain (CTD) of Pol II largest subunit (RPB1), which serves as a platform for assembly of factors that regulate transcription initiation, elongation, termination and mRNA processing. The protein is DNA-directed RNA polymerase II subunit RPB1 (RPB1) of Euplotoides octocarinatus (Freshwater ciliate).